The sequence spans 392 residues: Adenosine 3'-phospho 5'-phosphosulfate transporter 2 (392 aa).

The segment at 11–35 (NINGSASGQQAPTSNSPTLTRKSSS) is disordered. The next 10 membrane-spanning stretches (helical) occupy residues 62-82 (CAGV…IFTV), 87-107 (PFGW…GLVE), 136-156 (LVLA…LGYL), 159-179 (PTQV…SILI), 185-205 (GPLD…FTLA), 212-232 (NFNL…AAIG), 249-269 (VVFY…LVTG), 286-306 (FGYG…VLAL), 314-334 (IAAT…FVLF), and 338-358 (FTVQ…LNVY).

The protein belongs to the nucleotide-sugar transporter family. SLC35B subfamily.

The protein resides in the golgi apparatus membrane. Mediates the transport of adenosine 3'-phospho 5'-phosphosulfate (PAPS), from cytosol into Golgi. PAPS is a universal sulfuryl donor for sulfation events that take place in the Golgi. Essential for viability. Involved in glycosaminoglycan synthesis and the subsequent signaling. May be involved in hh and dpp signaling by controlling the sulfation of heparan sulfate (HS). The protein is Adenosine 3'-phospho 5'-phosphosulfate transporter 2 of Drosophila pseudoobscura pseudoobscura (Fruit fly).